The primary structure comprises 91 residues: Early E3B 10.4 kDa protein (91 aa).

Positions 1-22 (MIPRVLILLTLVALFCACSTLA) are cleaved as a signal peptide. At 23 to 34 (AVAHIEVDCIPP) the chain is on the lumenal side. The helical transmembrane segment at 35-60 (FTVYLLYGFVTLILICSLVTVVIAFI) threads the bilayer. Over 61-91 (QFIDWICVRIAYLRHHPQYRDRTIADLLRIL) the chain is Cytoplasmic.

The protein belongs to the adenoviridae E3B family.

It is found in the host endoplasmic reticulum membrane. In terms of biological role, down-regulates the EGF receptor. The polypeptide is Early E3B 10.4 kDa protein (Homo sapiens (Human)).